A 478-amino-acid polypeptide reads, in one-letter code: DKDSYKVSGGLHGVGVSCVNALSTDMKVTVYSHGKVHQQEYKKGIPQYDVKEIGESDLHGTKVQFLPDDTIFTSSEYKYETIANRLRELSFLNKGIRITLQDHRQVDAEGKSEIEMFHSEGGLREFVDYLDSTREKLIPTPLYMESDKGPIPVEVAMLYNTSYSENVFSYVNNINTIEGGTHVAGFRRALTRTLKSYADKSGMLEKLKMEVTGDDFREGLTAVISVKVQEPQFEGQTKTKLGNSDVMGAVDQVVGEMLNTYLEENPKEAKIIVQKVILAAQARNAARKAREMVQRKNVLSGSGLPGKLADCSESDPEKCELYLVEGDSAGGSAKQGRDRKYHAILPLRGKILNVEKAQEHRIYENDEIKNMITALGVSFGTEEGEKVLNLTKLRYHKVIIMTDADIDGSHIRTLILTFFFRYMRALIDGGHVYIAQPPLYLVKRGKEEKYCWTEEQREAAVKELAKDGKEDSVGIQRY.

The 120-residue stretch at 319–438 (CELYLVEGDS…GGHVYIAQPP (120 aa)) folds into the Toprim domain. Positions 325, 403, and 405 each coordinate Mg(2+).

This sequence belongs to the type II topoisomerase GyrB family. As to quaternary structure, heterotetramer, composed of two GyrA and two GyrB chains. In the heterotetramer, GyrA contains the active site tyrosine that forms a transient covalent intermediate with DNA, while GyrB binds cofactors and catalyzes ATP hydrolysis. Mg(2+) serves as cofactor. The cofactor is Mn(2+). Ca(2+) is required as a cofactor.

Its subcellular location is the cytoplasm. It carries out the reaction ATP-dependent breakage, passage and rejoining of double-stranded DNA.. Its function is as follows. A type II topoisomerase that negatively supercoils closed circular double-stranded (ds) DNA in an ATP-dependent manner to modulate DNA topology and maintain chromosomes in an underwound state. Negative supercoiling favors strand separation, and DNA replication, transcription, recombination and repair, all of which involve strand separation. Also able to catalyze the interconversion of other topological isomers of dsDNA rings, including catenanes and knotted rings. Type II topoisomerases break and join 2 DNA strands simultaneously in an ATP-dependent manner. This Cytophaga hutchinsonii protein is DNA gyrase subunit B (gyrB).